A 155-amino-acid chain; its full sequence is 6,7-dimethyl-8-ribityllumazine synthase (155 aa).

5-amino-6-(D-ribitylamino)uracil is bound by residues tryptophan 22, 56 to 58, and 80 to 82; these read SFE and AVI. 85 to 86 is a binding site for (2S)-2-hydroxy-3-oxobutyl phosphate; the sequence is AT. Catalysis depends on histidine 88, which acts as the Proton donor. Phenylalanine 113 contacts 5-amino-6-(D-ribitylamino)uracil. Arginine 127 provides a ligand contact to (2S)-2-hydroxy-3-oxobutyl phosphate.

The protein belongs to the DMRL synthase family.

The catalysed reaction is (2S)-2-hydroxy-3-oxobutyl phosphate + 5-amino-6-(D-ribitylamino)uracil = 6,7-dimethyl-8-(1-D-ribityl)lumazine + phosphate + 2 H2O + H(+). It functions in the pathway cofactor biosynthesis; riboflavin biosynthesis; riboflavin from 2-hydroxy-3-oxobutyl phosphate and 5-amino-6-(D-ribitylamino)uracil: step 1/2. Functionally, catalyzes the formation of 6,7-dimethyl-8-ribityllumazine by condensation of 5-amino-6-(D-ribitylamino)uracil with 3,4-dihydroxy-2-butanone 4-phosphate. This is the penultimate step in the biosynthesis of riboflavin. The polypeptide is 6,7-dimethyl-8-ribityllumazine synthase (Chloroflexus aurantiacus (strain ATCC 29364 / DSM 637 / Y-400-fl)).